We begin with the raw amino-acid sequence, 134 residues long: Small ribosomal subunit protein uS11 (134 aa).

The protein belongs to the universal ribosomal protein uS11 family. Part of the 30S ribosomal subunit. Interacts with proteins S7 and S18. Binds to IF-3.

Located on the platform of the 30S subunit, it bridges several disparate RNA helices of the 16S rRNA. Forms part of the Shine-Dalgarno cleft in the 70S ribosome. The chain is Small ribosomal subunit protein uS11 from Acidovorax ebreus (strain TPSY) (Diaphorobacter sp. (strain TPSY)).